The primary structure comprises 427 residues: Dihydroorotase (427 aa).

Zn(2+)-binding residues include H60 and H62. Substrate contacts are provided by residues H62–R64 and N94. Zn(2+) contacts are provided by D152, H179, and H232. Residue N278 coordinates substrate. Residue D305 participates in Zn(2+) binding. The active site involves D305. Residues H309 and F323 to G324 each bind substrate.

It belongs to the metallo-dependent hydrolases superfamily. DHOase family. Class I DHOase subfamily. Requires Zn(2+) as cofactor.

The enzyme catalyses (S)-dihydroorotate + H2O = N-carbamoyl-L-aspartate + H(+). It functions in the pathway pyrimidine metabolism; UMP biosynthesis via de novo pathway; (S)-dihydroorotate from bicarbonate: step 3/3. Functionally, catalyzes the reversible cyclization of carbamoyl aspartate to dihydroorotate. In Enterococcus faecalis (strain ATCC 700802 / V583), this protein is Dihydroorotase.